A 233-amino-acid chain; its full sequence is Ras-related protein Rab-20 (233 aa).

Residues Gly17, Lys18, Thr19, Asp32, and Thr36 each coordinate GTP. A Mg(2+)-binding site is contributed by Thr19. Short sequence motifs (switch) lie at residues 28–41 (RRFP…GGAF) and 55–72 (DTAG…YCRG). Mg(2+) is bound by residues Thr36 and Asp55. Residues Gly58, Asn113, Lys114, and Asp116 each contribute to the GTP site. Residues 119–130 (SERDTEGGEKEG) are compositionally biased toward basic and acidic residues. Residues 119–138 (SERDTEGGEKEGPASGKVGS) are disordered. Residues Ala183 and Lys184 each contribute to the GTP site. Residues Cys231 and Cys232 are each lipidated (S-geranylgeranyl cysteine).

The protein belongs to the small GTPase superfamily. Rab family. Requires Mg(2+) as cofactor. Present in a variety of tissues, but not in brain.

It is found in the cytoplasmic vesicle. It localises to the phagosome. The protein localises to the phagosome membrane. Its subcellular location is the golgi apparatus. The catalysed reaction is GTP + H2O = GDP + phosphate + H(+). Regulated by guanine nucleotide exchange factors (GEFs) which promote the exchange of bound GDP for free GTP. Regulated by GTPase activating proteins (GAPs) which increase the GTP hydrolysis activity. Inhibited by GDP dissociation inhibitors (GDIs). In terms of biological role, plays a role in apical endocytosis/recycling. Plays a role in the maturation and acidification of phagosomes that engulf pathogens, such as S.aureus and Mycobacterium. Plays a role in the fusion of phagosomes with lysosomes. The polypeptide is Ras-related protein Rab-20 (Mus musculus (Mouse)).